We begin with the raw amino-acid sequence, 340 residues long: Phosphoribosylformylglycinamidine cyclo-ligase (340 aa).

It belongs to the AIR synthase family.

It is found in the cytoplasm. The catalysed reaction is 2-formamido-N(1)-(5-O-phospho-beta-D-ribosyl)acetamidine + ATP = 5-amino-1-(5-phospho-beta-D-ribosyl)imidazole + ADP + phosphate + H(+). It functions in the pathway purine metabolism; IMP biosynthesis via de novo pathway; 5-amino-1-(5-phospho-D-ribosyl)imidazole from N(2)-formyl-N(1)-(5-phospho-D-ribosyl)glycinamide: step 2/2. The sequence is that of Phosphoribosylformylglycinamidine cyclo-ligase from Streptococcus gordonii (strain Challis / ATCC 35105 / BCRC 15272 / CH1 / DL1 / V288).